The chain runs to 415 residues: Transcription termination factor Rho (415 aa).

The Rho RNA-BD domain occupies 52–119; the sequence is ADIASGVLDI…TDVVRVNGRT (68 aa). ATP-binding positions include 161 to 166, 173 to 178, and R204; these read GKGQRG and KTGKTV.

Belongs to the Rho family. As to quaternary structure, homohexamer. The homohexamer assembles into an open ring structure.

Functionally, facilitates transcription termination by a mechanism that involves Rho binding to the nascent RNA, activation of Rho's RNA-dependent ATPase activity, and release of the mRNA from the DNA template. This is Transcription termination factor Rho from Streptomyces coelicolor (strain ATCC BAA-471 / A3(2) / M145).